We begin with the raw amino-acid sequence, 720 residues long: Fatty acid CoA ligase Acsl3 (720 aa).

A helical; Signal-anchor for type III membrane protein membrane pass occupies residues Ile21–Phe41. The Cytoplasmic portion of the chain corresponds to Tyr42–Lys720. Residue Ser683 is modified to Phosphoserine.

This sequence belongs to the ATP-dependent AMP-binding enzyme family. The cofactor is Mg(2+). Predominantly expressed in the brain, and to a much lesser extent, in lung, adrenal gland, kidney, small intestine, and adipose tissue but not detected in heart or liver.

It localises to the mitochondrion outer membrane. The protein resides in the peroxisome membrane. It is found in the microsome membrane. The protein localises to the endoplasmic reticulum membrane. The enzyme catalyses a long-chain fatty acid + ATP + CoA = a long-chain fatty acyl-CoA + AMP + diphosphate. The catalysed reaction is (5Z,8Z,11Z,14Z)-eicosatetraenoate + ATP + CoA = (5Z,8Z,11Z,14Z)-eicosatetraenoyl-CoA + AMP + diphosphate. It catalyses the reaction a medium-chain fatty acid + ATP + CoA = a medium-chain fatty acyl-CoA + AMP + diphosphate. It carries out the reaction 15-hydroxy-(5Z,8Z,11Z,13E)-eicosatetraenoate + ATP + CoA = 15-hydroxy-(5Z,8Z,11Z,13E)-eicosatetraenoyl-CoA + AMP + diphosphate. The enzyme catalyses 12-hydroxy-(5Z,8Z,10E,14Z)-eicosatetraenoate + ATP + CoA = 12-hydroxy-(5Z,8Z,10E,14Z)-eicosatetraenoyl-CoA + AMP + diphosphate. The catalysed reaction is 5-hydroxy-(6E,8Z,11Z,14Z)-eicosatetraenoate + ATP + CoA = 5-hydroxy-(6E,8Z,11Z,14Z)-eicosatetraenoyl-CoA + AMP + diphosphate. It catalyses the reaction 14,15-epoxy-(5Z,8Z,11Z)-eicosatrienoate + ATP + CoA = 14,15-epoxy-(5Z,8Z,11Z)-eicosatrienoyl-CoA + AMP + diphosphate. It carries out the reaction 11,12-epoxy-(5Z,8Z,14Z)-eicosatrienoate + ATP + CoA = 11,12-epoxy-(5Z,8Z,14Z)-eicosatrienoyl-CoA + AMP + diphosphate. The enzyme catalyses (E)-hexadec-2-enoate + ATP + CoA = (2E)-hexadecenoyl-CoA + AMP + diphosphate. The catalysed reaction is hexadecanoate + ATP + CoA = hexadecanoyl-CoA + AMP + diphosphate. It catalyses the reaction tetradecanoate + ATP + CoA = tetradecanoyl-CoA + AMP + diphosphate. It carries out the reaction dodecanoate + ATP + CoA = dodecanoyl-CoA + AMP + diphosphate. The enzyme catalyses octadecanoate + ATP + CoA = octadecanoyl-CoA + AMP + diphosphate. The catalysed reaction is eicosanoate + ATP + CoA = eicosanoyl-CoA + AMP + diphosphate. It catalyses the reaction (9Z)-octadecenoate + ATP + CoA = (9Z)-octadecenoyl-CoA + AMP + diphosphate. It carries out the reaction (9Z)-hexadecenoate + ATP + CoA = (9Z)-hexadecenoyl-CoA + AMP + diphosphate. The enzyme catalyses (9Z,12Z)-octadecadienoate + ATP + CoA = (9Z,12Z)-octadecadienoyl-CoA + AMP + diphosphate. The catalysed reaction is (9Z,12Z,15Z)-octadecatrienoate + ATP + CoA = (9Z,12Z,15Z)-octadecatrienoyl-CoA + AMP + diphosphate. It catalyses the reaction (4Z,7Z,10Z,13Z,16Z,19Z)-docosahexaenoate + ATP + CoA = (4Z,7Z,10Z,13Z,16Z,19Z)-docosahexaenoyl-CoA + AMP + diphosphate. It carries out the reaction (5Z,8Z,11Z,14Z,17Z)-eicosapentaenoate + ATP + CoA = (5Z,8Z,11Z,14Z,17Z)-eicosapentaenoyl-CoA + AMP + diphosphate. The enzyme catalyses a fatty acid + ATP + CoA = a fatty acyl-CoA + AMP + diphosphate. Catalyzes the conversion of long-chain fatty acids to their active form acyl-CoA for both synthesis of cellular lipids, and degradation via beta-oxidation. ACSL3 is required for the incorporation of fatty acids into phosphatidylcholine, the major phospholipid located on the surface of VLDL (very low density lipoproteins). Has mainly an anabolic role in energy metabolism. Mediates hepatic lipogenesis. Preferentially uses myristate, laurate, arachidonate and eicosapentaenoate as substrates. Both isoforms exhibit the same level of activity. The polypeptide is Fatty acid CoA ligase Acsl3 (Rattus norvegicus (Rat)).